The following is a 454-amino-acid chain: Kynurenine 3-monooxygenase (454 aa).

Belongs to the aromatic-ring hydroxylase family. KMO subfamily. FAD is required as a cofactor.

The catalysed reaction is L-kynurenine + NADPH + O2 + H(+) = 3-hydroxy-L-kynurenine + NADP(+) + H2O. It participates in cofactor biosynthesis; NAD(+) biosynthesis; quinolinate from L-kynurenine: step 1/3. In terms of biological role, catalyzes the hydroxylation of L-kynurenine (L-Kyn) to form 3-hydroxy-L-kynurenine (L-3OHKyn). Required for synthesis of quinolinic acid. In Salinispora arenicola (strain CNS-205), this protein is Kynurenine 3-monooxygenase.